The following is a 499-amino-acid chain: MTLQLNGEMLTINDIKTFLNKEDTVEVTQEALERVKKSRQTVEHIIENKETIYGITTGFGLFSDVRIDKDEYNQLQVNLIRSHACGVGKPFSEEVALVMMVLRLNTLLKGHSGTTVALVEQLVYYINNRIVPVIPQQGSLGASGDLAPLSHLALALIGEGNVFFKGEEVDSRYVLNQLNRNPIQLQAKEGLALINGTQAMTAQGVINYIEAEALGYQAEWIAALTHQALNGITDAYNEKVHKARNFQEQIDVAARMLDWLDGSELTTTQGDIRVQDAYTLRCIPQIHGASFQVFNYVKEKLEFEMNAANDNPLIFDEGDETLVISGGNFHGQPIAFALDFLKLGVSELANVSERRLERLVNPQLNNGLPAFLSPQPGLQSGAMIMQYAAASLVSENKTLAHPASVDSIPSSANQEDHVSMGTIASRHGYHIIENARRVLAIETIIALQAVEYKDIDKLSPKTYEKYQELRHIVPSITEDRQFHKDIEAVSQYLQDLAYM.

The segment at residues 142-144 (ASG) is a cross-link (5-imidazolinone (Ala-Gly)). Position 143 is a 2,3-didehydroalanine (Ser) (Ser143).

This sequence belongs to the PAL/histidase family. In terms of processing, contains an active site 4-methylidene-imidazol-5-one (MIO), which is formed autocatalytically by cyclization and dehydration of residues Ala-Ser-Gly.

The protein localises to the cytoplasm. The enzyme catalyses L-histidine = trans-urocanate + NH4(+). It participates in amino-acid degradation; L-histidine degradation into L-glutamate; N-formimidoyl-L-glutamate from L-histidine: step 1/3. The sequence is that of Histidine ammonia-lyase from Staphylococcus saprophyticus subsp. saprophyticus (strain ATCC 15305 / DSM 20229 / NCIMB 8711 / NCTC 7292 / S-41).